The primary structure comprises 475 residues: Aspartyl/glutamyl-tRNA(Asn/Gln) amidotransferase subunit B (475 aa).

This sequence belongs to the GatB/GatE family. GatB subfamily. Heterotrimer of A, B and C subunits.

It catalyses the reaction L-glutamyl-tRNA(Gln) + L-glutamine + ATP + H2O = L-glutaminyl-tRNA(Gln) + L-glutamate + ADP + phosphate + H(+). It carries out the reaction L-aspartyl-tRNA(Asn) + L-glutamine + ATP + H2O = L-asparaginyl-tRNA(Asn) + L-glutamate + ADP + phosphate + 2 H(+). Functionally, allows the formation of correctly charged Asn-tRNA(Asn) or Gln-tRNA(Gln) through the transamidation of misacylated Asp-tRNA(Asn) or Glu-tRNA(Gln) in organisms which lack either or both of asparaginyl-tRNA or glutaminyl-tRNA synthetases. The reaction takes place in the presence of glutamine and ATP through an activated phospho-Asp-tRNA(Asn) or phospho-Glu-tRNA(Gln). In Chromobacterium violaceum (strain ATCC 12472 / DSM 30191 / JCM 1249 / CCUG 213 / NBRC 12614 / NCIMB 9131 / NCTC 9757 / MK), this protein is Aspartyl/glutamyl-tRNA(Asn/Gln) amidotransferase subunit B.